The sequence spans 193 residues: ATP synthase subunit b 2 (193 aa).

Residues 44-64 (IFWLVLTLLAIYFVLTKIALP) traverse the membrane as a helical segment.

It belongs to the ATPase B chain family. F-type ATPases have 2 components, F(1) - the catalytic core - and F(0) - the membrane proton channel. F(1) has five subunits: alpha(3), beta(3), gamma(1), delta(1), epsilon(1). F(0) has three main subunits: a(1), b(2) and c(10-14). The alpha and beta chains form an alternating ring which encloses part of the gamma chain. F(1) is attached to F(0) by a central stalk formed by the gamma and epsilon chains, while a peripheral stalk is formed by the delta and b chains.

Its subcellular location is the cell inner membrane. F(1)F(0) ATP synthase produces ATP from ADP in the presence of a proton or sodium gradient. F-type ATPases consist of two structural domains, F(1) containing the extramembraneous catalytic core and F(0) containing the membrane proton channel, linked together by a central stalk and a peripheral stalk. During catalysis, ATP synthesis in the catalytic domain of F(1) is coupled via a rotary mechanism of the central stalk subunits to proton translocation. Its function is as follows. Component of the F(0) channel, it forms part of the peripheral stalk, linking F(1) to F(0). The b'-subunit is a diverged and duplicated form of b found in plants and photosynthetic bacteria. The polypeptide is ATP synthase subunit b 2 (atpF2) (Jannaschia sp. (strain CCS1)).